Here is a 542-residue protein sequence, read N- to C-terminus: uncharacterized protein (542 aa).

The next 12 helical transmembrane spans lie at 12 to 32 (LVFG…GTVL), 57 to 77 (FGDV…AILY), 94 to 114 (VIVM…SWTA), 123 to 143 (AAAV…AGLA), 168 to 188 (LFAV…AALV), 191 to 211 (FVVS…LVTL), 216 to 236 (IDAP…AFLL), 243 to 263 (SGVV…PTVI), 277 to 297 (IATF…IPGA), 313 to 333 (VLAL…VQAT), 358 to 378 (VTSW…AVPM), and 391 to 411 (LIIF…GTSL).

Belongs to the monovalent cation:proton antiporter 1 (CPA1) transporter (TC 2.A.36) family.

The protein localises to the cell membrane. This is an uncharacterized protein from Mycobacterium bovis (strain ATCC BAA-935 / AF2122/97).